We begin with the raw amino-acid sequence, 569 residues long: Endonuclease/exonuclease/phosphatase family domain-containing protein 1 (569 aa).

The N-myristoyl glycine moiety is linked to residue Gly2. Phosphoserine occurs at positions 16 and 25. The 30-residue stretch at 38–67 (ERLNINTATEEELMTLPGVTRAVARSIVEY) folds into the HhH domain. Phosphoserine occurs at positions 106, 110, 160, and 173. Residues 200–224 (SRPPSTHTNGGLTFTAKPHPSPTSL) are disordered. Residues 202 to 211 (PPSTHTNGGL) are compositionally biased toward polar residues. Thr265 is subject to Phosphothreonine. The tract at residues 549-569 (VPRNGNGVTLEPSEANIKHER) is disordered.

The protein is Endonuclease/exonuclease/phosphatase family domain-containing protein 1 (Eepd1) of Mus musculus (Mouse).